The sequence spans 346 residues: Angiopoietin-related protein 7 (346 aa).

The N-terminal stretch at 1–26 (MLKKPLSAVTWLCIFIVAFVSHPAWL) is a signal peptide. Residues 39-119 (QLKAANCCEE…DIMQLQAAQT (81 aa)) are a coiled coil. Asn58 is a glycosylation site (N-linked (GlcNAc...) asparagine). In terms of domain architecture, Fibrinogen C-terminal spans 122-343 (QTSADAIYDC…RVEMKIRPED (222 aa)). Cys131 and Cys162 are joined by a disulfide. N-linked (GlcNAc...) asparagine glycans are attached at residues Asn253 and Asn267. The cysteines at positions 285 and 298 are disulfide-linked.

In terms of assembly, homotetramer; disulfide-linked. As to expression, highly expressed in the cornea (at protein level). Expression is restricted to the stromal layer. Also detected at the junction between the corneal stromal layer and the conjuctiva. Not detected in the sclera.

It is found in the secreted. Functionally, has a role in the formation and organization of the extracellular matrix. In the eye, it functions as a mediator of dexamethasone-induced matrix deposition in the trabecular meshwork, the tissue responsible for the outflow of the ocular aqueous humor and for the maintenance of intraocular pressure. Is a negative regulator of angiogenesis in the cornea, and plays a major role in maintaining corneal avascularity and transparency. This Homo sapiens (Human) protein is Angiopoietin-related protein 7 (ANGPTL7).